Consider the following 94-residue polypeptide: Protein FAM24B (94 aa).

The first 21 residues, 1 to 21 (MPVIAGGILAALLLLIVVVLC), serve as a signal peptide directing secretion.

Belongs to the FAM24 family.

It is found in the secreted. The protein is Protein FAM24B (FAM24B) of Homo sapiens (Human).